Consider the following 71-residue polypeptide: Beta-defensin 25 (71 aa).

Residues 1–22 (MAKWILLIVALLVLGHVPSGST) form the signal peptide. 3 disulfide bridges follow: Cys27/Cys54, Cys34/Cys48, and Cys38/Cys55.

This sequence belongs to the beta-defensin family.

The protein localises to the secreted. In terms of biological role, has antibacterial activity. The chain is Beta-defensin 25 (Defb25) from Rattus norvegicus (Rat).